A 103-amino-acid chain; its full sequence is Small ribosomal subunit protein uS10 (103 aa).

It belongs to the universal ribosomal protein uS10 family. In terms of assembly, part of the 30S ribosomal subunit.

Its function is as follows. Involved in the binding of tRNA to the ribosomes. This is Small ribosomal subunit protein uS10 from Syntrophobacter fumaroxidans (strain DSM 10017 / MPOB).